Reading from the N-terminus, the 320-residue chain is Glycerol-3-phosphate dehydrogenase [NAD(P)+] (320 aa).

3 residues coordinate NADPH: Phe-11, Arg-30, and Lys-102. 3 residues coordinate sn-glycerol 3-phosphate: Lys-102, Gly-130, and Ser-132. Residue Ala-134 coordinates NADPH. Lys-185, Asp-238, Ser-248, Arg-249, and Asn-250 together coordinate sn-glycerol 3-phosphate. Catalysis depends on Lys-185, which acts as the Proton acceptor. An NADPH-binding site is contributed by Arg-249. Glu-270 serves as a coordination point for NADPH.

It belongs to the NAD-dependent glycerol-3-phosphate dehydrogenase family.

The protein localises to the cytoplasm. It catalyses the reaction sn-glycerol 3-phosphate + NAD(+) = dihydroxyacetone phosphate + NADH + H(+). The enzyme catalyses sn-glycerol 3-phosphate + NADP(+) = dihydroxyacetone phosphate + NADPH + H(+). It functions in the pathway membrane lipid metabolism; glycerophospholipid metabolism. In terms of biological role, catalyzes the reduction of the glycolytic intermediate dihydroxyacetone phosphate (DHAP) to sn-glycerol 3-phosphate (G3P), the key precursor for phospholipid synthesis. The protein is Glycerol-3-phosphate dehydrogenase [NAD(P)+] of Ruegeria sp. (strain TM1040) (Silicibacter sp.).